Here is a 159-residue protein sequence, read N- to C-terminus: ATP synthase subunit b (159 aa).

The chain crosses the membrane as a helical span at residues 7–27 (DFIWTLINFFVLLFILKILLY).

This sequence belongs to the ATPase B chain family. As to quaternary structure, F-type ATPases have 2 components, F(1) - the catalytic core - and F(0) - the membrane proton channel. F(1) has five subunits: alpha(3), beta(3), gamma(1), delta(1), epsilon(1). F(0) has three main subunits: a(1), b(2) and c(10-14). The alpha and beta chains form an alternating ring which encloses part of the gamma chain. F(1) is attached to F(0) by a central stalk formed by the gamma and epsilon chains, while a peripheral stalk is formed by the delta and b chains.

It is found in the cell membrane. In terms of biological role, f(1)F(0) ATP synthase produces ATP from ADP in the presence of a proton or sodium gradient. F-type ATPases consist of two structural domains, F(1) containing the extramembraneous catalytic core and F(0) containing the membrane proton channel, linked together by a central stalk and a peripheral stalk. During catalysis, ATP synthesis in the catalytic domain of F(1) is coupled via a rotary mechanism of the central stalk subunits to proton translocation. Its function is as follows. Component of the F(0) channel, it forms part of the peripheral stalk, linking F(1) to F(0). In Carboxydothermus hydrogenoformans (strain ATCC BAA-161 / DSM 6008 / Z-2901), this protein is ATP synthase subunit b.